A 153-amino-acid chain; its full sequence is Cytochrome c-type biogenesis protein CcmE (153 aa).

Residues 1–6 (MNARRR) lie on the Cytoplasmic side of the membrane. A helical; Signal-anchor for type II membrane protein transmembrane segment spans residues 7–27 (LWSLLMLILAVGTAATLTIMA). The Periplasmic portion of the chain corresponds to 28–153 (LRRNLTYLYM…LDTPIAQTTP (126 aa)). Heme-binding residues include His121 and Tyr125. Positions 130-141 (LTNKMQPTPTQH) are enriched in polar residues. Positions 130–153 (LTNKMQPTPTQHTHLDTPIAQTTP) are disordered.

The protein belongs to the CcmE/CycJ family.

Its subcellular location is the cell inner membrane. Heme chaperone required for the biogenesis of c-type cytochromes. Transiently binds heme delivered by CcmC and transfers the heme to apo-cytochromes in a process facilitated by CcmF and CcmH. This Xylella fastidiosa (strain 9a5c) protein is Cytochrome c-type biogenesis protein CcmE.